Here is a 270-residue protein sequence, read N- to C-terminus: Allergen Asp f 7 (270 aa).

Residues 1 to 21 (MAPIFKSLALVSALFAAISSA) form the signal peptide. Disordered stretches follow at residues 53 to 97 (YPTP…QPTQ) and 113 to 167 (ADSA…GPCS). Positions 63–81 (VVESTPTPTPSAAPEQAEP) are enriched in low complexity. The span at 83–97 (ETSTQPETTKSQPTQ) shows a compositional bias: polar residues. Residues 127 to 149 (PATTAAPSTSTTTQAAPSAPPAA) show a composition bias toward low complexity. The span at 150–162 (NSGSTEKAASSGY) shows a compositional bias: polar residues.

The protein is Allergen Asp f 7 of Aspergillus fumigatus (strain ATCC MYA-4609 / CBS 101355 / FGSC A1100 / Af293) (Neosartorya fumigata).